Reading from the N-terminus, the 433-residue chain is Homeobox protein Hox-D3 (433 aa).

Disordered regions lie at residues 44-198 (STPH…SKRV), 258-280 (GILH…AAGH), and 401-433 (HHGP…LTHL). The segment covering 58–74 (SLDSDYPSSACSIQSSA) has biased composition (polar residues). Positions 97–106 (NSQGGGGGNQ) are enriched in gly residues. Residues 116–132 (PPQPPPPPPPTLPPSSP) are compositionally biased toward pro residues. The span at 146-159 (GGLSASSSSSTISK) shows a compositional bias: low complexity. An Antp-type hexapeptide motif is present at residues 161–166 (IFPWMK). Polar residues predominate over residues 171–183 (NSKQKNSCATSGE). The segment at residues 195–254 (SKRVRTAYTSAQLVELEKEFHFNRYLCRPRRVEMANLLNLTERQIKIWFQNRRMKYKKDQ) is a DNA-binding region (homeobox).

Belongs to the Antp homeobox family. Detected in adult kidney, but not in other adult tissues tested.

Its subcellular location is the nucleus. Functionally, sequence-specific transcription factor which is part of a developmental regulatory system that provides cells with specific positional identities on the anterior-posterior axis. This Mus musculus (Mouse) protein is Homeobox protein Hox-D3 (Hoxd3).